We begin with the raw amino-acid sequence, 122 residues long: Small ribosomal subunit protein uS13 (122 aa).

The interval 97-122 (PVRGQRTHTNARTRKGPAKAIAGKKK) is disordered.

This sequence belongs to the universal ribosomal protein uS13 family. Part of the 30S ribosomal subunit. Forms a loose heterodimer with protein S19. Forms two bridges to the 50S subunit in the 70S ribosome.

In terms of biological role, located at the top of the head of the 30S subunit, it contacts several helices of the 16S rRNA. In the 70S ribosome it contacts the 23S rRNA (bridge B1a) and protein L5 of the 50S subunit (bridge B1b), connecting the 2 subunits; these bridges are implicated in subunit movement. Contacts the tRNAs in the A and P-sites. In Rhizobium rhizogenes (strain K84 / ATCC BAA-868) (Agrobacterium radiobacter), this protein is Small ribosomal subunit protein uS13.